The primary structure comprises 317 residues: NADPH-dependent D-xylose reductase (317 aa).

The active-site Proton donor is Tyr47. Residue His109 participates in substrate binding. NADP(+)-binding positions include 164–165, 213–222, and 269–279; these read SN, SSFGPQSFVE, and KSNNPDRLLSN.

Belongs to the aldo/keto reductase family.

It catalyses the reaction xylitol + NAD(+) = D-xylose + NADH + H(+). The catalysed reaction is xylitol + NADP(+) = D-xylose + NADPH + H(+). It participates in carbohydrate metabolism; D-xylose degradation. Its function is as follows. Reduces D-xylose into xylitol. Preferentially utilizes NADPH as a cosubstrate. This chain is NADPH-dependent D-xylose reductase (XYL1), found in Meyerozyma guilliermondii (strain ATCC 6260 / CBS 566 / DSM 6381 / JCM 1539 / NBRC 10279 / NRRL Y-324) (Yeast).